The primary structure comprises 349 residues: tRNA N6-adenosine threonylcarbamoyltransferase (349 aa).

Fe cation contacts are provided by His114 and His118. Substrate-binding positions include 136 to 140 (IMSGG), Asp169, Gly182, and Asn280. Asp308 contacts Fe cation.

Belongs to the KAE1 / TsaD family. It depends on Fe(2+) as a cofactor.

The protein resides in the cytoplasm. The catalysed reaction is L-threonylcarbamoyladenylate + adenosine(37) in tRNA = N(6)-L-threonylcarbamoyladenosine(37) in tRNA + AMP + H(+). In terms of biological role, required for the formation of a threonylcarbamoyl group on adenosine at position 37 (t(6)A37) in tRNAs that read codons beginning with adenine. Is involved in the transfer of the threonylcarbamoyl moiety of threonylcarbamoyl-AMP (TC-AMP) to the N6 group of A37, together with TsaE and TsaB. TsaD likely plays a direct catalytic role in this reaction. This Ehrlichia chaffeensis (strain ATCC CRL-10679 / Arkansas) protein is tRNA N6-adenosine threonylcarbamoyltransferase.